The primary structure comprises 337 residues: tRNA N6-adenosine threonylcarbamoyltransferase (337 aa).

His-111 and His-115 together coordinate Fe cation. Substrate-binding positions include 134–138, Asp-167, Gly-180, and Asn-272; that span reads LVSGG. Asp-300 lines the Fe cation pocket.

It belongs to the KAE1 / TsaD family. The cofactor is Fe(2+).

It localises to the cytoplasm. It carries out the reaction L-threonylcarbamoyladenylate + adenosine(37) in tRNA = N(6)-L-threonylcarbamoyladenosine(37) in tRNA + AMP + H(+). In terms of biological role, required for the formation of a threonylcarbamoyl group on adenosine at position 37 (t(6)A37) in tRNAs that read codons beginning with adenine. Is involved in the transfer of the threonylcarbamoyl moiety of threonylcarbamoyl-AMP (TC-AMP) to the N6 group of A37, together with TsaE and TsaB. TsaD likely plays a direct catalytic role in this reaction. The polypeptide is tRNA N6-adenosine threonylcarbamoyltransferase (Escherichia coli O45:K1 (strain S88 / ExPEC)).